The primary structure comprises 378 residues: Putative glutamate--cysteine ligase 2 (378 aa).

It belongs to the glutamate--cysteine ligase type 2 family. YbdK subfamily.

The enzyme catalyses L-cysteine + L-glutamate + ATP = gamma-L-glutamyl-L-cysteine + ADP + phosphate + H(+). Its function is as follows. ATP-dependent carboxylate-amine ligase which exhibits weak glutamate--cysteine ligase activity. The polypeptide is Putative glutamate--cysteine ligase 2 (Ectopseudomonas mendocina (strain ymp) (Pseudomonas mendocina)).